Consider the following 116-residue polypeptide: Small ribosomal subunit protein uS13m (116 aa).

Residues 92-116 are disordered; that stretch reads HQDGSPLRGQRTHTNARTARKQIRK.

Belongs to the universal ribosomal protein uS13 family. In terms of assembly, part of the small ribosomal subunit.

The protein localises to the mitochondrion. Its function is as follows. Located at the top of the head of the small subunit, it contacts several helices of the 18S rRNA. This chain is Small ribosomal subunit protein uS13m (RPS13), found in Triticum aestivum (Wheat).